We begin with the raw amino-acid sequence, 520 residues long: Bifunctional purine biosynthesis protein PurH (520 aa).

Residues 1–147 (MAKIGRALIS…KNNRDVTVVV (147 aa)) enclose the MGS-like domain.

It belongs to the PurH family.

It carries out the reaction (6R)-10-formyltetrahydrofolate + 5-amino-1-(5-phospho-beta-D-ribosyl)imidazole-4-carboxamide = 5-formamido-1-(5-phospho-D-ribosyl)imidazole-4-carboxamide + (6S)-5,6,7,8-tetrahydrofolate. It catalyses the reaction IMP + H2O = 5-formamido-1-(5-phospho-D-ribosyl)imidazole-4-carboxamide. Its pathway is purine metabolism; IMP biosynthesis via de novo pathway; 5-formamido-1-(5-phospho-D-ribosyl)imidazole-4-carboxamide from 5-amino-1-(5-phospho-D-ribosyl)imidazole-4-carboxamide (10-formyl THF route): step 1/1. It functions in the pathway purine metabolism; IMP biosynthesis via de novo pathway; IMP from 5-formamido-1-(5-phospho-D-ribosyl)imidazole-4-carboxamide: step 1/1. The sequence is that of Bifunctional purine biosynthesis protein PurH from Citrifermentans bemidjiense (strain ATCC BAA-1014 / DSM 16622 / JCM 12645 / Bem) (Geobacter bemidjiensis).